A 209-amino-acid polypeptide reads, in one-letter code: Glycerol-3-phosphate acyltransferase (209 aa).

Helical transmembrane passes span isoleucine 5 to glycine 25, leucine 50 to alanine 70, tyrosine 74 to glycine 94, isoleucine 115 to leucine 135, and alanine 151 to leucine 171.

Belongs to the PlsY family. Probably interacts with PlsX.

It is found in the cell membrane. The enzyme catalyses an acyl phosphate + sn-glycerol 3-phosphate = a 1-acyl-sn-glycero-3-phosphate + phosphate. Its pathway is lipid metabolism; phospholipid metabolism. Its function is as follows. Catalyzes the transfer of an acyl group from acyl-phosphate (acyl-PO(4)) to glycerol-3-phosphate (G3P) to form lysophosphatidic acid (LPA). This enzyme utilizes acyl-phosphate as fatty acyl donor, but not acyl-CoA or acyl-ACP. This Limosilactobacillus reuteri (strain DSM 20016) (Lactobacillus reuteri) protein is Glycerol-3-phosphate acyltransferase.